We begin with the raw amino-acid sequence, 255 residues long: Homeobox-leucine zipper protein ATHB-23 (255 aa).

The homeobox DNA-binding region spans 68–127; the sequence is MGEKKRRLNMEQLKALEKDFELGNKLESDRKLELARALGLQPRQIAIWFQNRRARSKTKQ. Residues 128–163 form a leucine-zipper region; it reads LEKDYDMLKRQFESLRDENEVLQTQNQKLQAQVMAL.

The protein belongs to the HD-ZIP homeobox family. Class I subfamily. Expressed in young leaves, in the adaxial domain of leaf primordia and the rib meristem. Expressed in the styles of flowers and siliques.

It is found in the nucleus. Its function is as follows. Probable transcription factor. This chain is Homeobox-leucine zipper protein ATHB-23 (ATHB-23), found in Arabidopsis thaliana (Mouse-ear cress).